A 148-amino-acid polypeptide reads, in one-letter code: MTDIPDRKEAVISLWPEFAKAIVSGKKTVEFRRRIPLPALSARIWIYATRPVKSVIGFAYLEAIVQGDVNTLWSRYGREAFLSEQQYRDYFEGTEKATAFLLRDHQPIRPINLDQLKEIRANFQPPQSLTWLRKEETQKLVSLTSQVE.

Residues 13–70 (SLWPEFAKAIVSGKKTVEFRRRIPLPALSARIWIYATRPVKSVIGFAYLEAIVQGDVN) form the ASCH domain.

The cofactor is Mn(2+). Ni(2+) serves as cofactor.

Functionally, shows sequence-specific endoribonuclease activity towards single-stranded RNA (ssRNA), with a preference for the bond between pyrimidine and adenine nucleotides. May also have 5'-exonuclease activity. This is ASCH domain-containing ribonuclease from Zymomonas mobilis subsp. mobilis (strain ATCC 10988 / DSM 424 / LMG 404 / NCIMB 8938 / NRRL B-806 / ZM1).